Here is a 621-residue protein sequence, read N- to C-terminus: F-box only protein 21 (621 aa).

The region spanning Ser-28 to Phe-77 is the F-box domain.

As to quaternary structure, interacts with SKP1 and CUL1.

Its function is as follows. Substrate-recognition component of the SCF (SKP1-CUL1-F-box protein)-type E3 ubiquitin ligase complex. This is F-box only protein 21 (FBXO21) from Pongo abelii (Sumatran orangutan).